A 1193-amino-acid polypeptide reads, in one-letter code: Kinesin-related protein 3 (1193 aa).

The 327-residue stretch at 3–329 folds into the Kinesin motor domain; it reads SIRVVCRFRP…LRFGSRAKNI (327 aa). 85–92 provides a ligand contact to ATP; the sequence is GQTGSGKT. 7 disordered regions span residues 377–429, 573–600, 611–630, 638–665, 973–1016, 1032–1114, and 1127–1193; these read KSSG…SSNV, SSIA…KHAD, LLQR…TATS, ISES…ATSS, GGGG…SANL, KAEP…PVKI, and FKKK…QQKD. Residues 405–429 show a composition bias toward low complexity; the sequence is SSNLSNSVNSTSNLNTSSNTSSSNV. A coiled-coil region spans residues 450 to 962; it reads ELIKVLQEKC…SQVGVDAQNT (513 aa). Composition is skewed to polar residues over residues 573–585 and 614–630; these read SSIA…TPKS and RTPS…TATS. 2 stretches are compositionally biased toward low complexity: residues 643-665 and 985-1006; these read NIGS…ATSS and HSSS…NNNH. The span at 1007 to 1016 shows a compositional bias: polar residues; the sequence is TTPTPLSANL. Composition is skewed to low complexity over residues 1044 to 1078, 1086 to 1109, and 1132 to 1149; these read NTSI…IGNS, NNNS…LNGN, and PSST…QSPQ. Composition is skewed to polar residues over residues 1150–1165 and 1174–1193; these read TPSH…ISPN and FSYT…QQKD.

This sequence belongs to the TRAFAC class myosin-kinesin ATPase superfamily. Kinesin family. Kinesin subfamily. In terms of assembly, dimer.

The protein resides in the cytoplasm. Its subcellular location is the cytoskeleton. Microtubule-associated force-producing protein that plays a role in organelle transport. Its motor activity is directed toward the microtubule's plus end. The maximal velocity in an inverted motility assay (moving microtubules on fixed motors) was 1.96 um/s. In Dictyostelium discoideum (Social amoeba), this protein is Kinesin-related protein 3 (kif3).